Consider the following 249-residue polypeptide: uncharacterized protein (249 aa).

This is an uncharacterized protein from Methanocaldococcus jannaschii (strain ATCC 43067 / DSM 2661 / JAL-1 / JCM 10045 / NBRC 100440) (Methanococcus jannaschii).